The sequence spans 305 residues: Coiled-coil domain-containing protein 50 (305 aa).

At Ala-2 the chain carries N-acetylalanine. Residue Ser-5 is modified to Phosphoserine. Positions 86–130 (EIAQEIQEKLTIEAERRRIQEKKDEDIARLLQEKELQEEKRRKKH) form a coiled coil. 2 disordered regions span residues 122 to 142 (QEEK…VFGD) and 218 to 305 (KKAK…HNKQ). 2 stretches are compositionally biased toward basic and acidic residues: residues 218 to 239 (KKAK…ECKL) and 247 to 263 (KSKE…DRPS). Positions 279–305 (THFTNQHSTTWHLPKSESSQKGFHNKQ) are enriched in polar residues.

In terms of assembly, interacts with RNF126. Phosphorylated on tyrosine residues. As to expression, widely expressed.

It is found in the cytoplasm. Functionally, involved in EGFR signaling. The polypeptide is Coiled-coil domain-containing protein 50 (Ccdc50) (Mus musculus (Mouse)).